The chain runs to 144 residues: Large ribosomal subunit protein uL11 (144 aa).

This sequence belongs to the universal ribosomal protein uL11 family. As to quaternary structure, part of the ribosomal stalk of the 50S ribosomal subunit. Interacts with L10 and the large rRNA to form the base of the stalk. L10 forms an elongated spine to which L12 dimers bind in a sequential fashion forming a multimeric L10(L12)X complex. One or more lysine residues are methylated.

Forms part of the ribosomal stalk which helps the ribosome interact with GTP-bound translation factors. The protein is Large ribosomal subunit protein uL11 of Francisella tularensis subsp. mediasiatica (strain FSC147).